Here is a 724-residue protein sequence, read N- to C-terminus: Solute carrier organic anion transporter family member 4C1 (724 aa).

The Cytoplasmic segment spans residues 1–105 (MKSAKGIENL…QCLQRCNTPG (105 aa)). Ser15, Ser16, Ser24, Ser26, and Ser28 each carry phosphoserine. Residues 30 to 71 (IEVSALSSDPQRENSQPQELQKPQEPQKSPEPSLPSAPPNVS) form a disordered region. Low complexity predominate over residues 44–60 (SQPQELQKPQEPQKSPE). A helical membrane pass occupies residues 106-126 (GFLLHYCLLAVTQGIVVNGLV). Residues 127-145 (NISISTVEKRYEMKSSLTG) are Extracellular-facing. The helical transmembrane segment at 146–166 (LISSSYDISFCLLSLFVSFFG) threads the bilayer. The Cytoplasmic portion of the chain corresponds to 167–172 (ERGHKP). A helical transmembrane segment spans residues 173–197 (RWLAFAAFMIGLGALVFSLPQFFSG). The Extracellular portion of the chain corresponds to 198 to 223 (EYKLGSLFEDTCVTTRNSTSCTSSTS). Residues 224-254 (SLSNYLYVFILGQLLLGAGGTPLYTLGTAFL) form a helical membrane-spanning segment. The Cytoplasmic portion of the chain corresponds to 255–274 (DDSVPTHKSSLYIGTGYAMS). A helical membrane pass occupies residues 275-295 (ILGPAIGYVLGGQLLTIYIDV). At 296–311 (AMGESTDVTEDDPRWL) the chain is on the extracellular side. A helical membrane pass occupies residues 312–336 (GAWWIGFLLSWIFAWSLIIPFSCFP). The Cytoplasmic portion of the chain corresponds to 337 to 377 (KHLPGTAEIQAGKTSQAHQSNSNADVKFGKSIKDFPAALKN). Residues 378–399 (LMKNAVFMCLVLSTSSEALITT) form a helical membrane-spanning segment. Residues 400 to 419 (GFATFLPKFIENQFGLTSSF) are Extracellular-facing. A helical transmembrane segment spans residues 420 to 443 (AATLGGAVLIPGAALGQILGGFLV). The Cytoplasmic portion of the chain corresponds to 444 to 447 (SKFR). The helical transmembrane segment at 448-471 (MTCKNTMKFALFTSGVALTLSFVF) threads the bilayer. The Extracellular portion of the chain corresponds to 472–580 (MYAKCENEPF…ETHCAKLPIF (109 aa)). The Kazal-like domain maps to 495 to 549 (GNLIAPCNANCNCSRSYYYPVCGDGVQYFSPCFAGCSNPVAHRKPKVYYNCSCIE). Cystine bridges form between Cys501/Cys530, Cys507/Cys526, and Cys516/Cys547. Residues 581 to 603 (LCIFFIVIIFTFMAGTPITVSIL) form a helical membrane-spanning segment. Residues 604–612 (RCVNHRQRS) lie on the Cytoplasmic side of the membrane. Residues 613-638 (LALGIQFMVLRLLGTIPGPIIFGFTI) form a helical membrane-spanning segment. Residues 639 to 672 (DSTCILWDINDCGIKGACWIYDNIKMAHMLVAIS) lie on the Extracellular side of the membrane. Residues 673-690 (VTCKVITMFFNGFAIFLY) traverse the membrane as a helical segment. Over 691–724 (KPPPSATDVSFHKENAVVTNVLAEQDLNKIVKEG) the chain is Cytoplasmic.

Belongs to the organo anion transporter (TC 2.A.60) family. In terms of tissue distribution, predominantly expressed in kidney but also weakly expressed in both fetal liver and kidney.

It is found in the basolateral cell membrane. It carries out the reaction estrone 3-sulfate(out) = estrone 3-sulfate(in). The catalysed reaction is L-thyroxine(out) = L-thyroxine(in). The enzyme catalyses 3,3',5-triiodo-L-thyronine(out) = 3,3',5-triiodo-L-thyronine(in). It catalyses the reaction chenodeoxycholate(out) = chenodeoxycholate(in). It carries out the reaction glycocholate(out) = glycocholate(in). The catalysed reaction is L-homoarginine(in) = L-homoarginine(out). The enzyme catalyses L-arginine(in) = L-arginine(out). It catalyses the reaction N(omega),N(omega)-dimethyl-L-arginine(out) = N(omega),N(omega)-dimethyl-L-arginine(in). In terms of biological role, mediates the transport of organic anions such as steroids (estrone 3-sulfate, chenodeoxycholate, glycocholate) and thyroid hormones (3,3',5-triiodo-L-thyronine (T3), L-thyroxine (T4)), in the kidney. Capable of transporting cAMP and pharmacological substances such as digoxin, ouabain and methotrexate. Transport is independent of sodium, chloride ion, and ATP. Transport activity is stimulated by an acidic extracellular environment due to increased substrate affinity to the transporter. The driving force for this transport activity is currently not known. The role of hydrogencarbonate (HCO3(-), bicarbonate) as the probable counteranion that exchanges for organic anions is still not well defined. Functions as an uptake transporter at the apical membrane, suggesting a role in renal reabsorption. Involved in the renal secretion of the uremic toxin ADMA (N(omega),N(omega)-dimethyl-L-arginine or asymmetrical dimethylarginine), which is associated to cardiovascular events and mortality, and the structurally related amino acids L-arginine and L-homoarginine (a cardioprotective biomarker). Can act bidirectionally, suggesting a dual protective role of this transport protein; exporting L-homoarginine after being synthesized in proximal tubule cells, and mediating uptake of ADMA from the blood into proximal tubule cells where it is degraded by the enzyme dimethylarginine dimethylaminohydrolase 1 (DDAH1). May be involved in sperm maturation by enabling directed movement of organic anions and compounds within or between cells. This ion-transporting process is important to maintain the strict epididymal homeostasis necessary for sperm maturation. May have a role in secretory functions since seminal vesicle epithelial cells are assumed to secrete proteins involved in decapacitation by modifying surface proteins to facilitate the acquisition of the ability to fertilize the egg. This chain is Solute carrier organic anion transporter family member 4C1, found in Homo sapiens (Human).